The following is a 393-amino-acid chain: Phosphopentomutase (393 aa).

Mn(2+) contacts are provided by Asp-11, Asp-282, His-287, Asp-323, His-324, and His-335.

Belongs to the phosphopentomutase family. The cofactor is Mn(2+).

It is found in the cytoplasm. The catalysed reaction is 2-deoxy-alpha-D-ribose 1-phosphate = 2-deoxy-D-ribose 5-phosphate. It catalyses the reaction alpha-D-ribose 1-phosphate = D-ribose 5-phosphate. The protein operates within carbohydrate degradation; 2-deoxy-D-ribose 1-phosphate degradation; D-glyceraldehyde 3-phosphate and acetaldehyde from 2-deoxy-alpha-D-ribose 1-phosphate: step 1/2. In terms of biological role, isomerase that catalyzes the conversion of deoxy-ribose 1-phosphate (dRib-1-P) and ribose 1-phosphate (Rib-1-P) to deoxy-ribose 5-phosphate (dRib-5-P) and ribose 5-phosphate (Rib-5-P), respectively. This is Phosphopentomutase from Caldanaerobacter subterraneus subsp. tengcongensis (strain DSM 15242 / JCM 11007 / NBRC 100824 / MB4) (Thermoanaerobacter tengcongensis).